The following is a 1551-amino-acid chain: Dual oxidase 1 (1551 aa).

Positions 1–21 (MGFCLALTWTFLVGSWTSMGA) are cleaved as a signal peptide. Residues 22–596 (QKPISWEVQR…YFEGSGFGFG (575 aa)) lie on the Extracellular side of the membrane. Positions 26 to 593 (SWEVQRFDGW…MQDYFEGSGF (568 aa)) are peroxidase-like; mediates peroxidase activity. Asparagine 94 carries an N-linked (GlcNAc...) asparagine glycan. Residues 197–222 (LASGPDPAFPRNAQPPLLMWSAPDPA) form a disordered region. 4 N-linked (GlcNAc...) asparagine glycosylation sites follow: asparagine 342, asparagine 354, asparagine 461, and asparagine 534. A helical membrane pass occupies residues 597–617 (VTIGTLCCFPLVSLLSAWIVA). Residues 618–1044 (RLRKKNFKKL…KRFIENYRRH (427 aa)) lie on the Cytoplasmic side of the membrane. EF-hand domains are found at residues 815–850 (PQDM…FMKG), 851–886 (SPEE…FIEI), and 895–930 (QLTE…HDSE). Ca(2+) is bound by residues aspartate 828, aspartate 830, asparagine 832, tyrosine 834, glutamate 839, aspartate 864, aspartate 866, asparagine 868, and glutamate 875. Positions 956 to 1248 (YISQEKICPS…GSFGLIQLPR (293 aa)) are interaction with TXNDC11. Residues 1045–1065 (IGCVAVFYAITGGLFLERAYY) form a helical membrane-spanning segment. The Extracellular segment spans residues 1066-1080 (YAFGAHHMGITDTTR). A helical membrane pass occupies residues 1081–1101 (VGIILSRGTAASISFMFSYIL). Residues 1087–1269 (RGTAASISFM…YVGDKLVSLS (183 aa)) form the Ferric oxidoreductase domain. The Cytoplasmic portion of the chain corresponds to 1102–1151 (LTMCRNLITFLRETFLNRYVPFDAAVDFHRLIASTAIVLTVLHSAGHVVN). The chain crosses the membrane as a helical span at residues 1152-1172 (VYLFSISPLSVLSCLFPGLFH). Over 1173–1188 (NDGSEFPQKYYWWFFQ) the chain is Extracellular. Residues 1189 to 1209 (TVPGLTGVMLLLVLAIMYVFA) form a helical membrane-spanning segment. At 1210–1226 (SHHFRRHSFRGFWLTHH) the chain is on the cytoplasmic side. The chain crosses the membrane as a helical span at residues 1227 to 1247 (LYILLYVLLIIHGSFGLIQLP). Position 1248 (arginine 1248) is a topological domain, extracellular. The helical transmembrane segment at 1249–1269 (FHIFFLVPALIYVGDKLVSLS) threads the bilayer. The FAD-binding FR-type domain maps to 1270–1376 (RKKVEISVVK…DGPFGEGHQE (107 aa)). At 1270 to 1551 (RKKVEISVVK…THFSHHYENF (282 aa)) the chain is on the cytoplasmic side.

The protein in the N-terminal section; belongs to the peroxidase family. In terms of assembly, interacts with TPO and CYBA. Interacts with TXNDC11. Post-translationally, N-glycosylated. Expressed in thyrocytes (at protein level). Specifically expressed in thyroid.

It is found in the apical cell membrane. The catalysed reaction is NADH + O2 + H(+) = H2O2 + NAD(+). It catalyses the reaction NADPH + O2 + H(+) = H2O2 + NADP(+). It participates in hormone biosynthesis; thyroid hormone biosynthesis. Peroxidase activity is inhibited by aminobenzohydrazide. The NADPH oxidase activity is calcium-dependent. In terms of biological role, generates hydrogen peroxide which is required for the activity of thyroid peroxidase/TPO and lactoperoxidase/LPO. Plays a role in thyroid hormones synthesis and lactoperoxidase-mediated antimicrobial defense at the surface of mucosa. May have its own peroxidase activity through its N-terminal peroxidase-like domain. This chain is Dual oxidase 1 (DUOX1), found in Canis lupus familiaris (Dog).